The following is a 289-amino-acid chain: ATP synthase gamma chain (289 aa).

This sequence belongs to the ATPase gamma chain family. As to quaternary structure, F-type ATPases have 2 components, CF(1) - the catalytic core - and CF(0) - the membrane proton channel. CF(1) has five subunits: alpha(3), beta(3), gamma(1), delta(1), epsilon(1). CF(0) has three main subunits: a, b and c.

Its subcellular location is the cell inner membrane. Produces ATP from ADP in the presence of a proton gradient across the membrane. The gamma chain is believed to be important in regulating ATPase activity and the flow of protons through the CF(0) complex. This chain is ATP synthase gamma chain, found in Coxiella burnetii (strain Dugway 5J108-111).